The primary structure comprises 1058 residues: Vacuolar protein sorting-associated protein 54 (1058 aa).

The stretch at 369–389 (SKKIVEVHERYEQKKKLLAKL) forms a coiled coil.

The protein belongs to the VPS54 family. In terms of assembly, component of the Golgi-associated retrograde protein (GARP) complex, also called VFT (VPS fifty-three) complex, composed of vps-51, vps-52, vps-53 and vps-54. Within the complex interacts with vps-52 and vps-53.

The protein resides in the golgi apparatus. It is found in the trans-Golgi network. In terms of biological role, acts as a component of the GARP complex that is involved in retrograde transport from early and late endosomes to the trans-Golgi network (TGN). The GARP complex facilitates tethering as well as SNARE complex assembly at the Golgi. In Caenorhabditis elegans, this protein is Vacuolar protein sorting-associated protein 54.